We begin with the raw amino-acid sequence, 147 residues long: Hemoglobin subunit beta (147 aa).

N-acetylvaline is present on Val-2. The Globin domain maps to 3 to 147; the sequence is HLSAEEKEAV…VANALAHKYH (145 aa). A Phosphoserine modification is found at Ser-45. Lys-60 bears the N6-acetyllysine mark. His-64 contributes to the heme b binding site. An N6-acetyllysine modification is found at Lys-83. Position 93 (His-93) interacts with heme b. An S-nitrosocysteine modification is found at Cys-94. Position 145 is an N6-acetyllysine (Lys-145).

This sequence belongs to the globin family. As to quaternary structure, heterotetramer of two alpha chains and two beta chains. In terms of tissue distribution, red blood cells.

Functionally, involved in oxygen transport from the lung to the various peripheral tissues. The chain is Hemoglobin subunit beta (HBB) from Sus scrofa (Pig).